A 158-amino-acid polypeptide reads, in one-letter code: Cyclic pyranopterin monophosphate synthase (158 aa).

Residues 75-77 and 113-114 contribute to the substrate site; these read LCH and ME. D128 is an active-site residue.

This sequence belongs to the MoaC family. As to quaternary structure, homohexamer; trimer of dimers.

It catalyses the reaction (8S)-3',8-cyclo-7,8-dihydroguanosine 5'-triphosphate = cyclic pyranopterin phosphate + diphosphate. The protein operates within cofactor biosynthesis; molybdopterin biosynthesis. Its function is as follows. Catalyzes the conversion of (8S)-3',8-cyclo-7,8-dihydroguanosine 5'-triphosphate to cyclic pyranopterin monophosphate (cPMP). In Roseiflexus sp. (strain RS-1), this protein is Cyclic pyranopterin monophosphate synthase.